A 217-amino-acid polypeptide reads, in one-letter code: Large ribosomal subunit protein uL1 (217 aa).

Serine 2 is subject to N-acetylserine. Position 11 is a phosphotyrosine (tyrosine 11). 2 positions are modified to N6-acetyllysine: lysine 91 and lysine 106. Lysine 118 bears the N6-acetyllysine; alternate mark. Lysine 118 is covalently cross-linked (Glycyl lysine isopeptide (Lys-Gly) (interchain with G-Cter in SUMO1); alternate). Lysine 118 participates in a covalent cross-link: Glycyl lysine isopeptide (Lys-Gly) (interchain with G-Cter in SUMO2); alternate. Lysine 161 participates in a covalent cross-link: Glycyl lysine isopeptide (Lys-Gly) (interchain with G-Cter in SUMO2).

Belongs to the universal ribosomal protein uL1 family. As to quaternary structure, component of the large ribosomal subunit.

It is found in the cytoplasm. Its function is as follows. Component of the large ribosomal subunit. The ribosome is a large ribonucleoprotein complex responsible for the synthesis of proteins in the cell. This is Large ribosomal subunit protein uL1 (Rpl10a) from Mus musculus (Mouse).